A 142-amino-acid polypeptide reads, in one-letter code: Peptide methionine sulfoxide reductase MsrB (142 aa).

The MsrB domain maps to 3 to 126; it reads KEKLKKKLSL…NSAALRFVPF (124 aa). Cysteine 115 serves as the catalytic Nucleophile.

This sequence belongs to the MsrB Met sulfoxide reductase family.

It catalyses the reaction L-methionyl-[protein] + [thioredoxin]-disulfide + H2O = L-methionyl-(R)-S-oxide-[protein] + [thioredoxin]-dithiol. The chain is Peptide methionine sulfoxide reductase MsrB from Lactococcus lactis subsp. lactis (strain IL1403) (Streptococcus lactis).